The sequence spans 779 residues: GATOR2 complex protein WDR24 (779 aa).

WD repeat units follow at residues 66-106, 112-152, 155-195, 199-239, 243-285, and 289-332; these read SLNF…RNKQ, EHKR…SVST, GQSE…RYER, AHTG…VKEI, QTFA…IPFA, and EHKD…VDRA. Disordered regions lie at residues 506-526 and 570-590; these read LETN…EGQA and DHPS…VSGS. The segment at 707–729 adopts a C4-type zinc-finger fold; that stretch reads NCSNCKRPMSNKGWICDRCHQCA. Zn(2+)-binding residues include Cys708, Cys711, Cys722, Cys725, Cys732, Cys735, Cys746, Cys749, His751, His754, His757, Cys768, Cys772, His774, and Cys776. The RING-type; atypical zinc finger occupies 730–779; the sequence is SVCAVCHHVVKGLFVWCQGCSHGGHLEHVMEWLKQSKHCPAGCGHLCEYT.

It belongs to the WD repeat WDR24 family. In terms of assembly, component of the GATOR2 subcomplex, composed of MIOS, SEC13, SEH1L, WDR24 and WDR59. The GATOR2 complex interacts with CASTOR1 and CASTOR2; the interaction is negatively regulated by arginine. The GATOR2 complex interacts with SESN1, SESN2 and SESN3; the interaction is negatively regulated by amino acids.

It is found in the lysosome membrane. The catalysed reaction is S-ubiquitinyl-[E2 ubiquitin-conjugating enzyme]-L-cysteine + [acceptor protein]-L-lysine = [E2 ubiquitin-conjugating enzyme]-L-cysteine + N(6)-ubiquitinyl-[acceptor protein]-L-lysine.. The protein operates within protein modification; protein ubiquitination. With respect to regulation, the GATOR2 complex is negatively regulated by the upstream amino acid sensors CASTOR1 and SESN2, which sequester the GATOR2 complex in absence of amino acids. In the presence of abundant amino acids, GATOR2 is released from CASTOR1 and SESN2 and activated. In terms of biological role, catalytic component of the GATOR2 complex, a multiprotein complex that acts as an activator of the amino acid-sensing branch of the mTORC1 signaling pathway. The GATOR2 complex indirectly activates mTORC1 through the inhibition of the GATOR1 subcomplex. GATOR2 probably acts as an E3 ubiquitin-protein ligase toward GATOR1. In the presence of abundant amino acids, the GATOR2 complex mediates ubiquitination of the NPRL2 core component of the GATOR1 complex, leading to GATOR1 inactivation. In the absence of amino acids, GATOR2 is inhibited, activating the GATOR1 complex. In addition to its role in regulation of the mTORC1 complex, promotes the acidification of lysosomes and facilitates autophagic flux. Within the GATOR2 complex, WDR24 constitutes the catalytic subunit that mediates 'Lys-6'-linked ubiquitination of NPRL2. The protein is GATOR2 complex protein WDR24 of Danio rerio (Zebrafish).